The primary structure comprises 261 residues: Acyl-[acyl-carrier-protein]--UDP-N-acetylglucosamine O-acyltransferase (261 aa).

It belongs to the transferase hexapeptide repeat family. LpxA subfamily. As to quaternary structure, homotrimer.

It is found in the cytoplasm. The catalysed reaction is a (3R)-hydroxyacyl-[ACP] + UDP-N-acetyl-alpha-D-glucosamine = a UDP-3-O-[(3R)-3-hydroxyacyl]-N-acetyl-alpha-D-glucosamine + holo-[ACP]. It participates in glycolipid biosynthesis; lipid IV(A) biosynthesis; lipid IV(A) from (3R)-3-hydroxytetradecanoyl-[acyl-carrier-protein] and UDP-N-acetyl-alpha-D-glucosamine: step 1/6. Its function is as follows. Involved in the biosynthesis of lipid A, a phosphorylated glycolipid that anchors the lipopolysaccharide to the outer membrane of the cell. In Trichlorobacter lovleyi (strain ATCC BAA-1151 / DSM 17278 / SZ) (Geobacter lovleyi), this protein is Acyl-[acyl-carrier-protein]--UDP-N-acetylglucosamine O-acyltransferase.